The following is a 257-amino-acid chain: 5'-nucleotidase SurE (257 aa).

4 residues coordinate a divalent metal cation: Asp15, Asp16, Ser46, and Asn99.

The protein belongs to the SurE nucleotidase family. A divalent metal cation is required as a cofactor.

It localises to the cytoplasm. The enzyme catalyses a ribonucleoside 5'-phosphate + H2O = a ribonucleoside + phosphate. Functionally, nucleotidase that shows phosphatase activity on nucleoside 5'-monophosphates. In Aliivibrio fischeri (strain ATCC 700601 / ES114) (Vibrio fischeri), this protein is 5'-nucleotidase SurE.